A 265-amino-acid chain; its full sequence is Tryptophan synthase alpha chain (265 aa).

Active-site proton acceptor residues include Glu50 and Asp61.

Belongs to the TrpA family. Tetramer of two alpha and two beta chains.

The catalysed reaction is (1S,2R)-1-C-(indol-3-yl)glycerol 3-phosphate + L-serine = D-glyceraldehyde 3-phosphate + L-tryptophan + H2O. It functions in the pathway amino-acid biosynthesis; L-tryptophan biosynthesis; L-tryptophan from chorismate: step 5/5. Functionally, the alpha subunit is responsible for the aldol cleavage of indoleglycerol phosphate to indole and glyceraldehyde 3-phosphate. This is Tryptophan synthase alpha chain from Trichodesmium erythraeum (strain IMS101).